Reading from the N-terminus, the 459-residue chain is Vacuolar fusion protein CCZ1 homolog (459 aa).

Belongs to the CCZ1 family.

This Nematostella vectensis (Starlet sea anemone) protein is Vacuolar fusion protein CCZ1 homolog.